A 478-amino-acid polypeptide reads, in one-letter code: Serine/threonine-protein phosphatase 2A activator 1 (478 aa).

The segment at 359–478 (DPSAIPPPSR…DITTKAPWAK (120 aa)) is disordered. A compositionally biased stretch (low complexity) spans 396-419 (APWATASQSTPPPSTGTAAPWATS).

This sequence belongs to the PTPA-type PPIase family.

Its subcellular location is the cytoplasm. The protein resides in the nucleus. The enzyme catalyses [protein]-peptidylproline (omega=180) = [protein]-peptidylproline (omega=0). Its function is as follows. PPIases accelerate the folding of proteins. It catalyzes the cis-trans isomerization of proline imidic peptide bonds in oligopeptides. Acts as a regulatory subunit for PP2A-like phosphatases modulating their activity or substrate specificity, probably by inducing a conformational change in the catalytic subunit, a direct target of the PPIase. Can reactivate inactive phosphatase PP2A-phosphatase methylesterase complexes (PP2Ai) in presence of ATP and Mg(2+) by dissociating the inactive form from the complex. In Aspergillus oryzae (strain ATCC 42149 / RIB 40) (Yellow koji mold), this protein is Serine/threonine-protein phosphatase 2A activator 1 (rrd1).